The following is a 242-amino-acid chain: MTQQFYVSPEQVMKDRADFARKGIARGRSVVVVSSLEGIALVAENPSPSLHKIGEIYDKIAFAAVGKYNEFESLRQAGVRYADVRGYSYDRDDVTARGLASVYAQSLGAVFTAEQKPFEVELAVAEVGENQDQDHLYRLTFDGSIADETGFIAMGGQVDSVHQVVAAGWASGSSLADVVGLAVGALGAGREPVVELDAANLEIAVLDRDSETSRGVARAFRRLNANEVNDLLSPRGSGSPAE.

The protein belongs to the peptidase T1A family. As to quaternary structure, the 20S proteasome core is composed of 14 alpha and 14 beta subunits that assemble into four stacked heptameric rings, resulting in a barrel-shaped structure. The two inner rings, each composed of seven catalytic beta subunits, are sandwiched by two outer rings, each composed of seven alpha subunits. The catalytic chamber with the active sites is on the inside of the barrel. Has a gated structure, the ends of the cylinder being occluded by the N-termini of the alpha-subunits. Is capped by the proteasome-associated ATPase, ARC.

Its subcellular location is the cytoplasm. Its pathway is protein degradation; proteasomal Pup-dependent pathway. Its activity is regulated as follows. The formation of the proteasomal ATPase ARC-20S proteasome complex, likely via the docking of the C-termini of ARC into the intersubunit pockets in the alpha-rings, may trigger opening of the gate for substrate entry. Interconversion between the open-gate and close-gate conformations leads to a dynamic regulation of the 20S proteasome proteolysis activity. Its function is as follows. Component of the proteasome core, a large protease complex with broad specificity involved in protein degradation. The sequence is that of Proteasome subunit alpha from Renibacterium salmoninarum (strain ATCC 33209 / DSM 20767 / JCM 11484 / NBRC 15589 / NCIMB 2235).